A 609-amino-acid polypeptide reads, in one-letter code: Autophagy-related protein 22-1 (609 aa).

A run of 4 helical transmembrane segments spans residues 95–115 (YYAG…GVEI), 117–137 (TASF…ILII), 151–171 (LLLV…LGVV), and 176–196 (MVGA…FVLL). Positions 214–238 (AREPPPALDGSRAQEGHSDTTNDID) are disordered. The segment covering 225-238 (RAQEGHSDTTNDID) has biased composition (basic and acidic residues). Residue N244 is glycosylated (N-linked (GlcNAc...) asparagine). A helical transmembrane segment spans residues 287-307 (IGIGYIGAIILQIVCILVVIA). N309 is a glycosylation site (N-linked (GlcNAc...) asparagine). 3 helical membrane-spanning segments follow: residues 317–337 (LVLF…ALWL), 381–401 (ILLF…VSGT), and 415–435 (AALG…AFSW). An N-linked (GlcNAc...) asparagine glycan is attached at N443. 4 consecutive transmembrane segments (helical) span residues 450–470 (IIAC…GFIP), 487–509 (FPLG…SFFG), 522–542 (ALYA…VGII), and 552–572 (AFVF…LVDV).

Belongs to the ATG22 family.

It localises to the vacuole membrane. Its function is as follows. Vacuolar effluxer which mediate the efflux of amino acids resulting from autophagic degradation. The release of autophagic amino acids allows the maintenance of protein synthesis and viability during nitrogen starvation. This is Autophagy-related protein 22-1 (atg22-1) from Neosartorya fischeri (strain ATCC 1020 / DSM 3700 / CBS 544.65 / FGSC A1164 / JCM 1740 / NRRL 181 / WB 181) (Aspergillus fischerianus).